The sequence spans 138 residues: MTAIFLMSMLFGLACGQAMSFCIPTEYMMHVERKECAYCLTINTTICAGYCMTRDFNGKLFLPKYALSQDVCTYRDFMYKTVEIPGCPHHVTPYFSYPVAISCKCGKCNTDYSDCIHEAIKTNYCTKPQKSYVLEFSI.

The N-terminal stretch at methionine 1–serine 20 is a signal peptide. 6 disulfide bridges follow: cysteine 22/cysteine 72, cysteine 36/cysteine 87, cysteine 39/cysteine 125, cysteine 47/cysteine 103, cysteine 51/cysteine 105, and cysteine 108/cysteine 115. N-linked (GlcNAc...) asparagine glycosylation is present at asparagine 43. Positions valine 133–isoleucine 138 are excised as a propeptide.

This sequence belongs to the glycoprotein hormones subunit beta family. Heterodimer of a common alpha chain and a unique beta chain which confers biological specificity to thyrotropin, lutropin, follitropin and gonadotropin.

The protein localises to the secreted. Indispensable for the control of thyroid structure and metabolism. The polypeptide is Thyrotropin subunit beta (TSHB) (Sus scrofa (Pig)).